Reading from the N-terminus, the 86-residue chain is Large ribosomal subunit protein bL31B (86 aa).

It belongs to the bacterial ribosomal protein bL31 family. Type B subfamily. Part of the 50S ribosomal subunit.

In Cupriavidus taiwanensis (strain DSM 17343 / BCRC 17206 / CCUG 44338 / CIP 107171 / LMG 19424 / R1) (Ralstonia taiwanensis (strain LMG 19424)), this protein is Large ribosomal subunit protein bL31B.